A 305-amino-acid polypeptide reads, in one-letter code: Ribonucleoside-diphosphate reductase small subunit (305 aa).

Residues glutamate 64, glutamate 94, and histidine 97 each contribute to the Fe cation site. The active site involves tyrosine 101. Residues 150–170 (VLVFLLIEGIFFISSFYSIAT) form a helical membrane-spanning segment. Fe cation contacts are provided by glutamate 157, glutamate 191, and histidine 194.

This sequence belongs to the ribonucleoside diphosphate reductase small chain family. In terms of assembly, heterotetramer composed of a homodimer of the large subunit (R1) and a homodimer of the small subunit (R2). Larger multisubunit protein complex are also active, composed of (R1)n(R2)n. Requires Fe cation as cofactor.

The protein localises to the host membrane. The catalysed reaction is a 2'-deoxyribonucleoside 5'-diphosphate + [thioredoxin]-disulfide + H2O = a ribonucleoside 5'-diphosphate + [thioredoxin]-dithiol. In terms of biological role, ribonucleoside-diphosphate reductase holoenzyme provides the precursors necessary for viral DNA synthesis. Allows virus growth in non-dividing cells, as well as reactivation from latency in infected hosts. Catalyzes the biosynthesis of deoxyribonucleotides from the corresponding ribonucleotides. The protein is Ribonucleoside-diphosphate reductase small subunit of Equus caballus (Horse).